Here is a 120-residue protein sequence, read N- to C-terminus: MPRVKRGVTARARHKKVLALSKGFRGRRGNVFRIAKQAVMKAGQYAYRDRRTKKRVFRQLWIARINAASRELGLTYSQFTNGLKKAAIEIDRKMLADLAVHDKAAFGSIVEQVKAKLAAA.

The protein belongs to the bacterial ribosomal protein bL20 family.

Binds directly to 23S ribosomal RNA and is necessary for the in vitro assembly process of the 50S ribosomal subunit. It is not involved in the protein synthesizing functions of that subunit. This chain is Large ribosomal subunit protein bL20, found in Paracidovorax citrulli (strain AAC00-1) (Acidovorax citrulli).